The chain runs to 853 residues: Transcription factor CPH2 (853 aa).

2 disordered regions span residues 165–209 (EPPI…DKNS) and 296–353 (NMNP…VHHP). Positions 180 to 194 (TTTVSSTNSITNTTK) are enriched in low complexity. Positions 205–274 (KDKNSHNMIE…TKATEYIKHL (70 aa)) constitute a bHLH domain. Positions 301–315 (SLPPPPQQMQAPPQP) are enriched in pro residues. Residues 330–352 (TPASQYPSPQQQVSPTQQQTVHH) show a composition bias toward low complexity.

The protein localises to the nucleus. Its function is as follows. Transcription factor that positively controls filamentous growth, virulence, and invasiveness. Binds directly to the two SRE-1-like elements upstream of TEC1 and thus positively regulates expression of this important hyphal growth regulator. Functions independently of known signaling cascades involving EFG1. Also regulates gene expression during intestinal colonization but is not involved in host cell adhesion. The sequence is that of Transcription factor CPH2 (CPH2) from Candida albicans (strain SC5314 / ATCC MYA-2876) (Yeast).